The following is a 160-amino-acid chain: S-adenosylmethionine decarboxylase proenzyme (160 aa).

The Schiff-base intermediate with substrate; via pyruvic acid role is filled by Ser-73. Ser-73 bears the Pyruvic acid (Ser); by autocatalysis mark. His-78 functions as the Proton acceptor; for processing activity in the catalytic mechanism. Cys-93 functions as the Proton donor; for catalytic activity in the catalytic mechanism.

It belongs to the prokaryotic AdoMetDC family. Type 1 subfamily. As to quaternary structure, heterotetramer of two alpha and two beta chains arranged as a dimer of alpha/beta heterodimers. Pyruvate serves as cofactor. In terms of processing, is synthesized initially as an inactive proenzyme. Formation of the active enzyme involves a self-maturation process in which the active site pyruvoyl group is generated from an internal serine residue via an autocatalytic post-translational modification. Two non-identical subunits are generated from the proenzyme in this reaction, and the pyruvate is formed at the N-terminus of the alpha chain, which is derived from the carboxyl end of the proenzyme. The post-translation cleavage follows an unusual pathway, termed non-hydrolytic serinolysis, in which the side chain hydroxyl group of the serine supplies its oxygen atom to form the C-terminus of the beta chain, while the remainder of the serine residue undergoes an oxidative deamination to produce ammonia and the pyruvoyl group blocking the N-terminus of the alpha chain.

The catalysed reaction is S-adenosyl-L-methionine + H(+) = S-adenosyl 3-(methylsulfanyl)propylamine + CO2. Its pathway is amine and polyamine biosynthesis; S-adenosylmethioninamine biosynthesis; S-adenosylmethioninamine from S-adenosyl-L-methionine: step 1/1. In terms of biological role, catalyzes the decarboxylation of S-adenosylmethionine to S-adenosylmethioninamine (dcAdoMet), the propylamine donor required for the synthesis of the polyamines spermine and spermidine from the diamine putrescine. The protein is S-adenosylmethionine decarboxylase proenzyme of Pseudomonas paraeruginosa (strain DSM 24068 / PA7) (Pseudomonas aeruginosa (strain PA7)).